The following is a 209-amino-acid chain: Uridine kinase (209 aa).

ATP is bound at residue 12–19; it reads GGSGSGKT.

It belongs to the uridine kinase family.

It localises to the cytoplasm. It carries out the reaction uridine + ATP = UMP + ADP + H(+). The catalysed reaction is cytidine + ATP = CMP + ADP + H(+). It participates in pyrimidine metabolism; CTP biosynthesis via salvage pathway; CTP from cytidine: step 1/3. The protein operates within pyrimidine metabolism; UMP biosynthesis via salvage pathway; UMP from uridine: step 1/1. The protein is Uridine kinase of Listeria welshimeri serovar 6b (strain ATCC 35897 / DSM 20650 / CCUG 15529 / CIP 8149 / NCTC 11857 / SLCC 5334 / V8).